Reading from the N-terminus, the 339-residue chain is MRNKILKKSKSILPGLFICLIIGIIAEFLGKSFPTIGAATFAIFMGIFLGNTLFKSDKYDEGTKFSEKDLLNYSIVLMGASLNIIDIMALGFNGVFYIAILMTLTICTTYFIGRKLGFGEKYSLLMSAGNAVCGSSAIGSVSPVIKAKDSDKVIAITIVNVTGTILMILLPLITSILYNNDVLQSSALMGGILQSVGQVIGSAKFIGDPVVELATVFKIIRIIFLVVVVLVFAKIEVNEENKEEIAHHHKPTHKVRIPWFIIGFFIICILNSIGIIPGILGRTFKWISSNFEIIALAGIGMRVKIGDLVKEGPKAMLYGGLVGVCQIIFALSLINIFIK.

8 helical membrane-spanning segments follow: residues 12 to 30 (ILPGLFICLIIGIIAEFLG), 35 to 54 (TIGAATFAIFMGIFLGNTLF), 90 to 112 (LGFNGVFYIAILMTLTICTTYFI), 122 to 144 (YSLLMSAGNAVCGSSAIGSVSPV), 156 to 178 (ITIVNVTGTILMILLPLITSILY), 210 to 232 (VVELATVFKIIRIIFLVVVVLVF), 259 to 281 (WFIIGFFIICILNSIGIIPGILG), and 316 to 338 (MLYGGLVGVCQIIFALSLINIFI).

Belongs to the UPF0324 family.

Its subcellular location is the cell membrane. The sequence is that of UPF0324 membrane protein CPE0129 from Clostridium perfringens (strain 13 / Type A).